The chain runs to 255 residues: Pimeloyl-[acyl-carrier protein] methyl ester esterase (255 aa).

Residues tryptophan 18, 78 to 79, and 139 to 143 each bind substrate; these read SL and FLALD. Residue serine 78 is the Nucleophile of the active site. Residues aspartate 203 and histidine 233 contribute to the active site. Substrate is bound at residue histidine 233.

The protein belongs to the AB hydrolase superfamily. Carboxylesterase BioH family. Monomer.

The protein localises to the cytoplasm. It catalyses the reaction 6-carboxyhexanoyl-[ACP] methyl ester + H2O = 6-carboxyhexanoyl-[ACP] + methanol + H(+). It participates in cofactor biosynthesis; biotin biosynthesis. Functionally, the physiological role of BioH is to remove the methyl group introduced by BioC when the pimeloyl moiety is complete. It allows to synthesize pimeloyl-ACP via the fatty acid synthetic pathway through the hydrolysis of the ester bonds of pimeloyl-ACP esters. The sequence is that of Pimeloyl-[acyl-carrier protein] methyl ester esterase from Xylella fastidiosa (strain M12).